The sequence spans 510 residues: MQKLYAEPPPSSAPVSMASSGGGGPPSGGGGGGGGGGGGGPPPPSNNNPNPTSNGGSMSPLARSAYTMNSMGLPVGGMSSVSPQAAATFSSSVLDSAAAVASMSASMSASMSASMNASMNGSMGAAAMNSMGGNCMTPSSMSYASMGSPLGNMGGCMAMSAASMSAAGLSGTYGAMPPGSREMETGSPNSLGRSRVDKPTTYRRSYTHAKPPYSYISLITMAIQNNPTRMLTLSEIYQFIMDLFPFYRQNQQRWQNSIRHSLSFNDCFVKIPRTPDKPGKGSFWTLHPDSGNMFENGCYLRRQKRFKDEKKEAIRQLHKSPSHSSLEATSPGKKDHEDSHHMHHHHHSRLDHHQHHKEAGGASIAGVNVLSAAHSKDAEALAMLHANAELCLSQQPQHVPTHHHHQHHQLQQEELSAMMANRCHPSLITDYHSSMHPLKQEPSGYTPSSHPFSINRLLPTESKADIKMYDMSQYAGYNALSPLTNSHAALGQDSYYQSLGYHAPAGTTSL.

Disordered regions lie at residues 1-62 (MQKL…SPLA) and 175-205 (AMPP…YRRS). Over residues 20–39 (SGGGGPPSGGGGGGGGGGGG) the composition is skewed to gly residues. Residues 47-60 (NNPNPTSNGGSMSP) are compositionally biased toward low complexity. Residues serine 187 and serine 190 each carry the phosphoserine modification. The fork-head DNA-binding region spans 209-300 (AKPPYSYISL…GNMFENGCYL (92 aa)). A disordered region spans residues 309–359 (EKKEAIRQLHKSPSHSSLEATSPGKKDHEDSHHMHHHHHSRLDHHQHHKEA). Phosphoserine occurs at positions 320, 322, and 330. Residues 341 to 356 (HMHHHHHSRLDHHQHH) show a composition bias toward basic residues.

Its subcellular location is the nucleus. Functionally, fkh promotes terminal as opposed to segmental development. In the absence of fkh, this developmental switch does not occur. The nuclear localization of the fkh protein suggest that fkh regulates the transcription of other, subordinate, genes. The protein is Protein fork head (fkh) of Drosophila melanogaster (Fruit fly).